The sequence spans 1742 residues: Kinase non-catalytic C-lobe domain-containing protein 1 (1742 aa).

Residues 37–217 form the KIND 1 domain; it reads VSLADILSLR…QELSENTWRG (181 aa). Disordered stretches follow at residues 215 to 288 and 365 to 455; these read WRGR…EGLA and FKTQ…TEQS. Ser-267 bears the Phosphoserine mark. Positions 403–412 are enriched in polar residues; that stretch reads LEASSPSQGS. Residues 426 to 445 are compositionally biased toward basic and acidic residues; sequence DSDHEGHIPRSEEKIPEESR. Residues 456–620 enclose the KIND 2 domain; that stretch reads LSLKDLLSKL…RASTCKVHPE (165 aa). 4 disordered regions span residues 703-727, 744-876, 948-1006, and 1028-1076; these read DQLA…REGT, SNQL…KMTA, GPAS…LSDI, and VTRE…ASDF. Basic and acidic residues predominate over residues 711–727; sequence SNEKPKEGSGHLDREGT. Residues 755-771 show a composition bias toward low complexity; the sequence is GATPDPDGDSGSPSSAT. The segment covering 782–791 has biased composition (polar residues); sequence VTQQKGTSGT. Positions 847–861 are enriched in basic and acidic residues; that stretch reads SDGHPEKPRPADRKL. Low complexity predominate over residues 949 to 965; sequence PASPSESTSEEPGSQPE. Ser-951 carries the phosphoserine modification. Polar residues predominate over residues 1043-1053; that stretch reads GPSQDSTSHAS. A coiled-coil region spans residues 1112-1177; sequence HTELEAQSPE…EMKSKVQFLS (66 aa). Residues 1239-1367 form the N-terminal Ras-GEF domain; the sequence is KARILQAGTP…ALLEVGTERR (129 aa). The Ras-GEF domain maps to 1461–1712; the sequence is STNQLFTQLT…SGADVSILAA (252 aa).

Interacts (via KIND2) with MAP2; the interaction enhances MAP2 phosphorylation and localizes KNDC1 to dendrites. As to expression, highly expressed in the brain and at low levels in the ovary. In the brain it is most prominently expressed in the cerebellum where it is restricted to the granular Purkinje cell layer.

It localises to the cell projection. It is found in the dendrite. The protein resides in the perikaryon. In terms of biological role, RAS-Guanine nucleotide exchange factor (GEF) that controls the negative regulation of neuronal dendrite growth by mediating a signaling pathway linking RAS and MAP2. May be involved in cellular senescence. The protein is Kinase non-catalytic C-lobe domain-containing protein 1 of Mus musculus (Mouse).